The primary structure comprises 315 residues: Glycine--tRNA ligase alpha subunit (315 aa).

It belongs to the class-II aminoacyl-tRNA synthetase family. As to quaternary structure, tetramer of two alpha and two beta subunits.

It is found in the cytoplasm. It catalyses the reaction tRNA(Gly) + glycine + ATP = glycyl-tRNA(Gly) + AMP + diphosphate. This chain is Glycine--tRNA ligase alpha subunit, found in Pseudomonas entomophila (strain L48).